The following is a 150-amino-acid chain: Cytochrome c oxidase subunit 5A, mitochondrial (150 aa).

The transit peptide at 1–41 (MLGAALRRCAVAATTWAGPRGLLHSSRTPGPAAAIQSVRCY) directs the protein to the mitochondrion. The SIFI-degron motif lies at 2–17 (LGAALRRCAVAATTWA). An N6-acetyllysine mark is found at Lys-87 and Lys-113. The residue at position 141 (Thr-141) is a Phosphothreonine.

It belongs to the cytochrome c oxidase subunit 5A family. Component of the cytochrome c oxidase (complex IV, CIV), a multisubunit enzyme composed of 14 subunits. The complex is composed of a catalytic core of 3 subunits MT-CO1, MT-CO2 and MT-CO3, encoded in the mitochondrial DNA, and 11 supernumerary subunits COX4I, COX5A, COX5B, COX6A, COX6B, COX6C, COX7A, COX7B, COX7C, COX8 and NDUFA4, which are encoded in the nuclear genome. The complex exists as a monomer or a dimer and forms supercomplexes (SCs) in the inner mitochondrial membrane with NADH-ubiquinone oxidoreductase (complex I, CI) and ubiquinol-cytochrome c oxidoreductase (cytochrome b-c1 complex, complex III, CIII), resulting in different assemblies (supercomplex SCI(1)III(2)IV(1) and megacomplex MCI(2)III(2)IV(2)). Interacts with AFG1L. Interacts with RAB5IF. In terms of processing, in response to mitochondrial stress, the precursor protein is ubiquitinated by the SIFI complex in the cytoplasm before mitochondrial import, leading to its degradation. Within the SIFI complex, UBR4 initiates ubiquitin chain that are further elongated or branched by KCMF1.

The protein resides in the mitochondrion inner membrane. It participates in energy metabolism; oxidative phosphorylation. In terms of biological role, component of the cytochrome c oxidase, the last enzyme in the mitochondrial electron transport chain which drives oxidative phosphorylation. The respiratory chain contains 3 multisubunit complexes succinate dehydrogenase (complex II, CII), ubiquinol-cytochrome c oxidoreductase (cytochrome b-c1 complex, complex III, CIII) and cytochrome c oxidase (complex IV, CIV), that cooperate to transfer electrons derived from NADH and succinate to molecular oxygen, creating an electrochemical gradient over the inner membrane that drives transmembrane transport and the ATP synthase. Cytochrome c oxidase is the component of the respiratory chain that catalyzes the reduction of oxygen to water. Electrons originating from reduced cytochrome c in the intermembrane space (IMS) are transferred via the dinuclear copper A center (CU(A)) of subunit 2 and heme A of subunit 1 to the active site in subunit 1, a binuclear center (BNC) formed by heme A3 and copper B (CU(B)). The BNC reduces molecular oxygen to 2 water molecules using 4 electrons from cytochrome c in the IMS and 4 protons from the mitochondrial matrix. The protein is Cytochrome c oxidase subunit 5A, mitochondrial (COX5A) of Colobus guereza (Mantled guereza).